Here is a 269-residue protein sequence, read N- to C-terminus: Tryptophan synthase alpha chain (269 aa).

Residues glutamate 49 and aspartate 60 each act as proton acceptor in the active site.

This sequence belongs to the TrpA family. As to quaternary structure, tetramer of two alpha and two beta chains.

The catalysed reaction is (1S,2R)-1-C-(indol-3-yl)glycerol 3-phosphate + L-serine = D-glyceraldehyde 3-phosphate + L-tryptophan + H2O. Its pathway is amino-acid biosynthesis; L-tryptophan biosynthesis; L-tryptophan from chorismate: step 5/5. In terms of biological role, the alpha subunit is responsible for the aldol cleavage of indoleglycerol phosphate to indole and glyceraldehyde 3-phosphate. This is Tryptophan synthase alpha chain from Pseudomonas entomophila (strain L48).